The chain runs to 242 residues: Dehydration-responsive element-binding protein 1J (242 aa).

A compositionally biased stretch (low complexity) spans 20-29 (SSATTAATAT). The segment at 20–44 (SSATTAATATGPASPKRPAGRTKFQ) is disordered. A DNA-binding region (AP2/ERF) is located at residues 50 to 109 (VFRGVRRRGRAGRWVCEVRVPGSRGDRLWVGTFDTAEEAARAHDAAMLALCGASASLNFA). The segment at 143–184 (FQRRGSTAATATATSGDAASTAPPSSSPVLSPNDDNASSAST) is disordered. The span at 148 to 184 (STAATATATSGDAASTAPPSSSPVLSPNDDNASSAST) shows a compositional bias: low complexity.

It belongs to the AP2/ERF transcription factor family. ERF subfamily.

It localises to the nucleus. In terms of biological role, transcriptional activator that binds specifically to the DNA sequence 5'-[AG]CCGAC-3'. Binding to the C-repeat/DRE element mediates high salinity- and dehydration-inducible transcription. The protein is Dehydration-responsive element-binding protein 1J (DREB1J) of Oryza sativa subsp. japonica (Rice).